The following is a 724-amino-acid chain: Phosphoribosylformylglycinamidine synthase subunit PurL (724 aa).

The active site involves His34. Tyr37 contacts ATP. Glu78 lines the Mg(2+) pocket. Residues 79 to 82 (SHNH) and Arg101 contribute to the substrate site. His80 (proton acceptor) is an active-site residue. Position 102 (Asp102) interacts with Mg(2+). Gln226 serves as a coordination point for substrate. Position 254 (Asp254) interacts with Mg(2+). 298-300 (ESQ) contributes to the substrate binding site. ATP is bound by residues Asp480 and Gly517. Asn518 contacts Mg(2+). Substrate is bound at residue Ser520.

This sequence belongs to the FGAMS family. Monomer. Part of the FGAM synthase complex composed of 1 PurL, 1 PurQ and 2 PurS subunits.

It is found in the cytoplasm. The enzyme catalyses N(2)-formyl-N(1)-(5-phospho-beta-D-ribosyl)glycinamide + L-glutamine + ATP + H2O = 2-formamido-N(1)-(5-O-phospho-beta-D-ribosyl)acetamidine + L-glutamate + ADP + phosphate + H(+). The protein operates within purine metabolism; IMP biosynthesis via de novo pathway; 5-amino-1-(5-phospho-D-ribosyl)imidazole from N(2)-formyl-N(1)-(5-phospho-D-ribosyl)glycinamide: step 1/2. Functionally, part of the phosphoribosylformylglycinamidine synthase complex involved in the purines biosynthetic pathway. Catalyzes the ATP-dependent conversion of formylglycinamide ribonucleotide (FGAR) and glutamine to yield formylglycinamidine ribonucleotide (FGAM) and glutamate. The FGAM synthase complex is composed of three subunits. PurQ produces an ammonia molecule by converting glutamine to glutamate. PurL transfers the ammonia molecule to FGAR to form FGAM in an ATP-dependent manner. PurS interacts with PurQ and PurL and is thought to assist in the transfer of the ammonia molecule from PurQ to PurL. This Methanopyrus kandleri (strain AV19 / DSM 6324 / JCM 9639 / NBRC 100938) protein is Phosphoribosylformylglycinamidine synthase subunit PurL.